Consider the following 338-residue polypeptide: Putative transport protein TM_1349 (338 aa).

7 consecutive transmembrane segments (helical) span residues 20–40, 68–88, 147–167, 203–223, 239–259, 263–283, and 297–317; these read ILIS…IVLM, ALLL…PPVF, VSVT…VFYI, VIFI…EAFN, FIPI…SLTL, GVLL…VVFI, and IILS…FVGV.

Belongs to the autoinducer-2 exporter (AI-2E) (TC 2.A.86) family.

The protein resides in the cell membrane. This chain is Putative transport protein TM_1349, found in Thermotoga maritima (strain ATCC 43589 / DSM 3109 / JCM 10099 / NBRC 100826 / MSB8).